Reading from the N-terminus, the 183-residue chain is Ribosome-recycling factor (183 aa).

The protein belongs to the RRF family.

Its subcellular location is the cytoplasm. Responsible for the release of ribosomes from messenger RNA at the termination of protein biosynthesis. May increase the efficiency of translation by recycling ribosomes from one round of translation to another. This is Ribosome-recycling factor from Afipia carboxidovorans (strain ATCC 49405 / DSM 1227 / KCTC 32145 / OM5) (Oligotropha carboxidovorans).